We begin with the raw amino-acid sequence, 280 residues long: Borealin (280 aa).

Residues 140–153 (KVAAKKPSTARRTR) are compositionally biased toward basic residues. The interval 140 to 187 (KVAAKKPSTARRTRASVGNVANTSKRTSKRGRATPSASKQAETSLLGY) is disordered.

It belongs to the borealin family. As to quaternary structure, component of the CPC at least composed of survivin/birc5, incenp, cdca8/borealin and/or cdca9/dasra-A, and aurkb/aurora-B. Interacts with incenp (via N-terminus).

Its subcellular location is the nucleus. The protein localises to the chromosome. It localises to the centromere. The protein resides in the cytoplasm. It is found in the cytoskeleton. Its subcellular location is the spindle. In terms of biological role, component of the chromosomal passenger complex (CPC), a complex that acts as a key regulator of mitosis. The CPC complex has essential functions at the centromere in ensuring correct chromosome alignment and segregation and is required for chromatin-induced microtubule stabilization and spindle assembly. Contributes to CPC function by facilitating loading of the CPC onto chromosomes. This chain is Borealin (cdca8), found in Xenopus laevis (African clawed frog).